The chain runs to 98 residues: Endoribonuclease antitoxin GhoS (98 aa).

As to quaternary structure, monomer. In terms of processing, unlike other TA antitoxins, this protein is stable.

Its function is as follows. Antitoxin component of a type V toxin-antitoxin (TA) system. Neutralizes the toxic effects of toxin GhoT by digesting ghoT transcripts in a sequence-specific manner. In concert with GhoT is involved in reducing cell growth during antibacterial stress. The sequence is that of Endoribonuclease antitoxin GhoS from Escherichia coli O157:H7.